Reading from the N-terminus, the 524-residue chain is Casein kinase I homolog 3 (524 aa).

The Protein kinase domain occupies 14 to 319; it reads YAVGPKIGEG…YLISLMDDAL (306 aa). ATP is bound by residues 20-28 and Lys60; that span reads IGEGSFGVI. Asp150 functions as the Proton acceptor in the catalytic mechanism. Disordered stretches follow at residues 352–414 and 427–474; these read HGYG…KQQH and PETH…EHNL. Over residues 360 to 373 the composition is skewed to low complexity; that stretch reads RVNGNTARNNVNTN. Composition is skewed to polar residues over residues 374–413 and 429–474; these read SKTR…TKQQ and THSN…EHNL. The YXXZ targeting signal motif lies at 444–447; sequence YDSI. S-palmitoyl cysteine attachment occurs at residues Cys517, Cys518, Cys519, Cys520, Cys522, Cys523, and Cys524.

The protein belongs to the protein kinase superfamily. CK1 Ser/Thr protein kinase family. Casein kinase I subfamily.

The protein localises to the cell membrane. It localises to the nucleus membrane. It is found in the vacuole membrane. It catalyses the reaction L-seryl-[protein] + ATP = O-phospho-L-seryl-[protein] + ADP + H(+). The enzyme catalyses L-threonyl-[protein] + ATP = O-phospho-L-threonyl-[protein] + ADP + H(+). Casein kinases are operationally defined by their preferential utilization of acidic proteins such as caseins as substrates. Phosphorylates MON1, inhibiting the guanine nucleotide exchange factor activity of the MON1-CCZ1 complex, possibly by preventing its recruitment to membranes by small GTPase RAB5 homologs. The chain is Casein kinase I homolog 3 (YCK3) from Saccharomyces cerevisiae (strain ATCC 204508 / S288c) (Baker's yeast).